Consider the following 209-residue polypeptide: tRNA (guanine-N(7)-)-methyltransferase (209 aa).

S-adenosyl-L-methionine is bound by residues Asp35, Glu60, Asn87, and Asp113. Residue Asp113 is part of the active site. 2 residues coordinate substrate: Lys117 and Asp149.

This sequence belongs to the class I-like SAM-binding methyltransferase superfamily. TrmB family.

The catalysed reaction is guanosine(46) in tRNA + S-adenosyl-L-methionine = N(7)-methylguanosine(46) in tRNA + S-adenosyl-L-homocysteine. Its pathway is tRNA modification; N(7)-methylguanine-tRNA biosynthesis. Its function is as follows. Catalyzes the formation of N(7)-methylguanine at position 46 (m7G46) in tRNA. This chain is tRNA (guanine-N(7)-)-methyltransferase, found in Prochlorococcus marinus subsp. pastoris (strain CCMP1986 / NIES-2087 / MED4).